We begin with the raw amino-acid sequence, 123 residues long: Small ribosomal subunit protein uS13c (123 aa).

Positions 89–123 are disordered; the sequence is RGKRHRNNLPVRGQRTRTNARSRRGSKKTVTGKKK. The segment covering 102-123 has biased composition (basic residues); that stretch reads QRTRTNARSRRGSKKTVTGKKK.

It belongs to the universal ribosomal protein uS13 family. Part of the 30S ribosomal subunit.

The protein resides in the plastid. It localises to the chloroplast. Its function is as follows. Located at the top of the head of the 30S subunit, it contacts several helices of the 16S rRNA. This Phaeodactylum tricornutum (strain CCAP 1055/1) protein is Small ribosomal subunit protein uS13c.